Here is a 129-residue protein sequence, read N- to C-terminus: Glycine cleavage system H protein (129 aa).

Residues 24–106 (LLKIGVSEFA…IGEGWLVILK (83 aa)) enclose the Lipoyl-binding domain. An N6-lipoyllysine modification is found at Lys-65.

This sequence belongs to the GcvH family. The glycine cleavage system is composed of four proteins: P, T, L and H. (R)-lipoate serves as cofactor.

Its function is as follows. The glycine cleavage system catalyzes the degradation of glycine. The H protein shuttles the methylamine group of glycine from the P protein to the T protein. This Prochlorococcus marinus (strain AS9601) protein is Glycine cleavage system H protein.